A 151-amino-acid chain; its full sequence is 3-hydroxyacyl-[acyl-carrier-protein] dehydratase FabZ (151 aa).

His56 is a catalytic residue.

This sequence belongs to the thioester dehydratase family. FabZ subfamily.

The protein resides in the cytoplasm. The enzyme catalyses a (3R)-hydroxyacyl-[ACP] = a (2E)-enoyl-[ACP] + H2O. Functionally, involved in unsaturated fatty acids biosynthesis. Catalyzes the dehydration of short chain beta-hydroxyacyl-ACPs and long chain saturated and unsaturated beta-hydroxyacyl-ACPs. This chain is 3-hydroxyacyl-[acyl-carrier-protein] dehydratase FabZ, found in Nitrobacter hamburgensis (strain DSM 10229 / NCIMB 13809 / X14).